A 196-amino-acid polypeptide reads, in one-letter code: Endonuclease V (196 aa).

Residues aspartate 37 and aspartate 98 each contribute to the Mg(2+) site.

It belongs to the endonuclease V family. Mg(2+) is required as a cofactor.

The protein localises to the cytoplasm. The catalysed reaction is Endonucleolytic cleavage at apurinic or apyrimidinic sites to products with a 5'-phosphate.. Its function is as follows. DNA repair enzyme involved in the repair of deaminated bases. Selectively cleaves double-stranded DNA at the second phosphodiester bond 3' to a deoxyinosine leaving behind the intact lesion on the nicked DNA. In Sulfurisphaera tokodaii (strain DSM 16993 / JCM 10545 / NBRC 100140 / 7) (Sulfolobus tokodaii), this protein is Endonuclease V.